We begin with the raw amino-acid sequence, 513 residues long: ATP synthase subunit alpha (513 aa).

169-176 provides a ligand contact to ATP; it reads GDRQTGKT.

The protein belongs to the ATPase alpha/beta chains family. F-type ATPases have 2 components, CF(1) - the catalytic core - and CF(0) - the membrane proton channel. CF(1) has five subunits: alpha(3), beta(3), gamma(1), delta(1), epsilon(1). CF(0) has three main subunits: a(1), b(2) and c(9-12). The alpha and beta chains form an alternating ring which encloses part of the gamma chain. CF(1) is attached to CF(0) by a central stalk formed by the gamma and epsilon chains, while a peripheral stalk is formed by the delta and b chains.

The protein localises to the cell inner membrane. The catalysed reaction is ATP + H2O + 4 H(+)(in) = ADP + phosphate + 5 H(+)(out). Produces ATP from ADP in the presence of a proton gradient across the membrane. The alpha chain is a regulatory subunit. The protein is ATP synthase subunit alpha of Pectobacterium carotovorum subsp. carotovorum (strain PC1).